Consider the following 547-residue polypeptide: Apolipoprotein N-acyltransferase (547 aa).

Transmembrane regions (helical) follow at residues 31–51 (ILSGILVGTSYIPFPPWALIF), 71–91 (FWAGWVTQFILTLIGFHWIAY), 106–126 (LALLLFCAFMHLYIPVAVAAG), 180–200 (LVGFHGLSAVVLLFNAWMGYV), and 210–230 (ALSHLSLLALTFAALVGWGFW). The CN hydrolase domain maps to 247–515 (VQANIGNLEK…KYLKNAPLTF (269 aa)). The active-site Proton acceptor is Glu-294. Lys-364 is a catalytic residue. Residue Cys-418 is the Nucleophile of the active site. Residues 515–535 (FFVQWGHWDWIVILLVLGAVI) form a helical membrane-spanning segment.

The protein belongs to the CN hydrolase family. Apolipoprotein N-acyltransferase subfamily.

Its subcellular location is the cell inner membrane. The catalysed reaction is N-terminal S-1,2-diacyl-sn-glyceryl-L-cysteinyl-[lipoprotein] + a glycerophospholipid = N-acyl-S-1,2-diacyl-sn-glyceryl-L-cysteinyl-[lipoprotein] + a 2-acyl-sn-glycero-3-phospholipid + H(+). It functions in the pathway protein modification; lipoprotein biosynthesis (N-acyl transfer). In terms of biological role, catalyzes the phospholipid dependent N-acylation of the N-terminal cysteine of apolipoprotein, the last step in lipoprotein maturation. This chain is Apolipoprotein N-acyltransferase, found in Bdellovibrio bacteriovorus (strain ATCC 15356 / DSM 50701 / NCIMB 9529 / HD100).